We begin with the raw amino-acid sequence, 397 residues long: Riboflavin biosynthesis protein RibBA (397 aa).

The tract at residues 1–199 (MFHRIEEALE…IEDLIAYRRH (199 aa)) is DHBP synthase. Residues 26-27 (RE), D31, 138-142 (RAGHT), and E162 each bind D-ribulose 5-phosphate. E27 is a binding site for Mg(2+). H141 is a Mg(2+) binding site. Positions 200–397 (HETLVTREVE…ASKLGHLLNL (198 aa)) are GTP cyclohydrolase II. Residue 250-254 (RVHSE) coordinates GTP. 3 residues coordinate Zn(2+): C255, C266, and C268. Residues Q271, 293-295 (EGR), and T315 each bind GTP. Residue D327 is the Proton acceptor; for GTP cyclohydrolase activity of the active site. Residue R329 is the Nucleophile; for GTP cyclohydrolase activity of the active site. T350 and K355 together coordinate GTP.

In the N-terminal section; belongs to the DHBP synthase family. It in the C-terminal section; belongs to the GTP cyclohydrolase II family. The cofactor is Mg(2+). Requires Mn(2+) as cofactor. It depends on Zn(2+) as a cofactor.

It catalyses the reaction D-ribulose 5-phosphate = (2S)-2-hydroxy-3-oxobutyl phosphate + formate + H(+). The enzyme catalyses GTP + 4 H2O = 2,5-diamino-6-hydroxy-4-(5-phosphoribosylamino)-pyrimidine + formate + 2 phosphate + 3 H(+). The protein operates within cofactor biosynthesis; riboflavin biosynthesis; 2-hydroxy-3-oxobutyl phosphate from D-ribulose 5-phosphate: step 1/1. Its pathway is cofactor biosynthesis; riboflavin biosynthesis; 5-amino-6-(D-ribitylamino)uracil from GTP: step 1/4. Functionally, catalyzes the conversion of D-ribulose 5-phosphate to formate and 3,4-dihydroxy-2-butanone 4-phosphate. In terms of biological role, catalyzes the conversion of GTP to 2,5-diamino-6-ribosylamino-4(3H)-pyrimidinone 5'-phosphate (DARP), formate and pyrophosphate. The sequence is that of Riboflavin biosynthesis protein RibBA from Bacillus mycoides (strain KBAB4) (Bacillus weihenstephanensis).